We begin with the raw amino-acid sequence, 217 residues long: GTP cyclohydrolase 1 (217 aa).

Zn(2+) contacts are provided by Cys-109, His-112, and Cys-180.

This sequence belongs to the GTP cyclohydrolase I family. Homomer.

The enzyme catalyses GTP + H2O = 7,8-dihydroneopterin 3'-triphosphate + formate + H(+). Its pathway is cofactor biosynthesis; 7,8-dihydroneopterin triphosphate biosynthesis; 7,8-dihydroneopterin triphosphate from GTP: step 1/1. In Aliivibrio salmonicida (strain LFI1238) (Vibrio salmonicida (strain LFI1238)), this protein is GTP cyclohydrolase 1.